Reading from the N-terminus, the 262-residue chain is Indole-3-glycerol phosphate synthase (262 aa).

The protein belongs to the TrpC family.

The catalysed reaction is 1-(2-carboxyphenylamino)-1-deoxy-D-ribulose 5-phosphate + H(+) = (1S,2R)-1-C-(indol-3-yl)glycerol 3-phosphate + CO2 + H2O. Its pathway is amino-acid biosynthesis; L-tryptophan biosynthesis; L-tryptophan from chorismate: step 4/5. This chain is Indole-3-glycerol phosphate synthase, found in Aromatoleum aromaticum (strain DSM 19018 / LMG 30748 / EbN1) (Azoarcus sp. (strain EbN1)).